A 424-amino-acid chain; its full sequence is Glutamyl-tRNA reductase (424 aa).

Substrate contacts are provided by residues threonine 49–arginine 52, serine 105, glutamate 110–glutamine 112, and glutamine 116. The active-site Nucleophile is cysteine 50. Glycine 185–alanine 190 serves as a coordination point for NADP(+).

Belongs to the glutamyl-tRNA reductase family. Homodimer.

It carries out the reaction (S)-4-amino-5-oxopentanoate + tRNA(Glu) + NADP(+) = L-glutamyl-tRNA(Glu) + NADPH + H(+). It participates in porphyrin-containing compound metabolism; protoporphyrin-IX biosynthesis; 5-aminolevulinate from L-glutamyl-tRNA(Glu): step 1/2. Functionally, catalyzes the NADPH-dependent reduction of glutamyl-tRNA(Glu) to glutamate 1-semialdehyde (GSA). In Legionella pneumophila (strain Lens), this protein is Glutamyl-tRNA reductase.